A 427-amino-acid polypeptide reads, in one-letter code: Peptidase B (427 aa).

Mn(2+)-binding residues include K195 and D200. Residue K207 is part of the active site. The Mn(2+) site is built by D218, D277, and E279. Residue R281 is part of the active site.

This sequence belongs to the peptidase M17 family. Homohexamer. It depends on Mn(2+) as a cofactor.

It localises to the cytoplasm. It carries out the reaction Release of an N-terminal amino acid, Xaa, from a peptide or arylamide. Xaa is preferably Glu or Asp but may be other amino acids, including Leu, Met, His, Cys and Gln.. Probably plays an important role in intracellular peptide degradation. This Escherichia coli O157:H7 protein is Peptidase B.